We begin with the raw amino-acid sequence, 1353 residues long: Xanthine dehydrogenase (1353 aa).

Residues 17-104 enclose the 2Fe-2S ferredoxin-type domain; it reads STLIFFVNGK…GSAVTTVEGI (88 aa). Residues Cys56, Cys61, Cys64, Cys86, Cys126, Cys129, Cys161, and Cys163 each contribute to the [2Fe-2S] cluster site. The FAD-binding PCMH-type domain occupies 245 to 434; sequence YKGERATWYR…VGLYFPKTLE (190 aa). Residues 273 to 280, Phe353, 363 to 367, Asp376, Leu424, and Lys442 contribute to the FAD site; these read LVVGNTEI and SLGGN. Mo-molybdopterin contacts are provided by Gln790 and Phe821. The substrate site is built by Glu825 and Arg903. Arg935 lines the Mo-molybdopterin pocket. Residue Phe937 coordinates substrate. A Mo-molybdopterin-binding site is contributed by Ala1102. Glu1285 functions as the Proton acceptor in the catalytic mechanism.

The protein belongs to the xanthine dehydrogenase family. In terms of assembly, homodimer. FAD serves as cofactor. It depends on Mo-molybdopterin as a cofactor. The cofactor is [2Fe-2S] cluster.

It is found in the peroxisome. The enzyme catalyses xanthine + NAD(+) + H2O = urate + NADH + H(+). The catalysed reaction is hypoxanthine + NAD(+) + H2O = xanthine + NADH + H(+). Its function is as follows. Key enzyme in purine degradation. Catalyzes the oxidation of hypoxanthine to xanthine. Catalyzes the oxidation of xanthine to uric acid. The chain is Xanthine dehydrogenase (XDH) from Calliphora vicina (Blue blowfly).